The sequence spans 183 residues: MNWQQAVETTVTGMGYELVECERSARGLLCVYIDRVPGSVYLTGPGEFVLVEDCELVTRQLRYLFEVENVDYSRLEVSSPGLDRPLRKVGDFLRFLGSDVDVTLKAPFQGRKNYRGLLRQAGDTPEQGFELVFQDGKEDKVLGFALDEVREARLVPVVDFKGRMRQTADAPQGAAQETGGHEE.

Belongs to the RimP family.

The protein localises to the cytoplasm. In terms of biological role, required for maturation of 30S ribosomal subunits. This is Ribosome maturation factor RimP from Leptothrix cholodnii (strain ATCC 51168 / LMG 8142 / SP-6) (Leptothrix discophora (strain SP-6)).